The following is a 311-amino-acid chain: HPr kinase/phosphorylase (311 aa).

Active-site residues include histidine 138 and lysine 159. 153–160 (GDSGIGKS) contributes to the ATP binding site. Serine 160 contributes to the Mg(2+) binding site. The Proton acceptor; for phosphorylation activity. Proton donor; for dephosphorylation activity role is filled by aspartate 177. Residues 201–210 (LEIRGVGIID) form an important for the catalytic mechanism of both phosphorylation and dephosphorylation region. Glutamate 202 is a Mg(2+) binding site. Arginine 243 is a catalytic residue. The interval 264–269 (PVKTGR) is important for the catalytic mechanism of dephosphorylation.

This sequence belongs to the HPrK/P family. In terms of assembly, homohexamer. It depends on Mg(2+) as a cofactor.

It carries out the reaction [HPr protein]-L-serine + ATP = [HPr protein]-O-phospho-L-serine + ADP + H(+). It catalyses the reaction [HPr protein]-O-phospho-L-serine + phosphate + H(+) = [HPr protein]-L-serine + diphosphate. Functionally, catalyzes the ATP- as well as the pyrophosphate-dependent phosphorylation of a specific serine residue in HPr, a phosphocarrier protein of the phosphoenolpyruvate-dependent sugar phosphotransferase system (PTS). HprK/P also catalyzes the pyrophosphate-producing, inorganic phosphate-dependent dephosphorylation (phosphorolysis) of seryl-phosphorylated HPr (P-Ser-HPr). The two antagonistic activities of HprK/P are regulated by several intracellular metabolites, which change their concentration in response to the absence or presence of rapidly metabolisable carbon sources (glucose, fructose, etc.) in the growth medium. Therefore, by controlling the phosphorylation state of HPr, HPrK/P is a sensor enzyme that plays a major role in the regulation of carbon metabolism and sugar transport: it mediates carbon catabolite repression (CCR), and regulates PTS-catalyzed carbohydrate uptake and inducer exclusion. The protein is HPr kinase/phosphorylase of Streptococcus gordonii (strain Challis / ATCC 35105 / BCRC 15272 / CH1 / DL1 / V288).